A 246-amino-acid polypeptide reads, in one-letter code: Trypsin V-B (246 aa).

Positions 1–15 (MKICIFFTLLGTVAA) are cleaved as a signal peptide. Positions 16–24 (FPTEDNDDR) are cleaved as a propeptide — activation peptide. Residues 25–244 (IVGGYTCQEH…YLNWIQQTVA (220 aa)) enclose the Peptidase S1 domain. 6 cysteine pairs are disulfide-bonded: C31-C160, C49-C65, C133-C233, C140-C206, C171-C185, and C196-C220. H64 serves as the catalytic Charge relay system. The Ca(2+) site is built by E76, N78, and E86. The active-site Charge relay system is the D108. Catalysis depends on S200, which acts as the Charge relay system.

The protein belongs to the peptidase S1 family. It depends on Ca(2+) as a cofactor.

The protein localises to the secreted. It localises to the extracellular space. The catalysed reaction is Preferential cleavage: Arg-|-Xaa, Lys-|-Xaa.. This is Trypsin V-B from Rattus norvegicus (Rat).